We begin with the raw amino-acid sequence, 752 residues long: MARSRSRSPRWKQRSLSPQSRNFEYHEERHFHGHYDPEYRHDQQRPFTWRMDDEKHGQNKPRIPPRVNSYHRSYVNRSPSPNVKPVEKFDTYKPHQEYFPGRGDDDRRSQYMPTYTESAATYMEHERDCYIPTVQGRYTPDDHRGRGRGSGRGEKPPQMSLGKPPKMSLGKPPQMSLADSLRFKEKWHEDELRHQRVQEESYPQSPRRGSEDFGTRNPFQKRYPEDHDFRKYGYTSKRPTDAARYENRDPARIPKWKPEHSFLPFQEKKEEWSFGAQGHRYTEREYPERSSTTRVSYDYRHKHHKLSESEQDFPDGRFHKHLKEEDRKYSSIKAPANRELDCFSTTRGREIENEQINGPFYLYNKNSVSYNHTNIKDADLEPCNDKWKKKISKEDCRKENASFSKQFDTSPKPEEKCYSLIKKKPLSVKVDRNKTDTFRSTSRYSAERQISHDLVAIGKTSDNFHPVFQHLDSTQNPENKPTEEFAQEIITLIHKVKADSFVTPDITLNERFSRIKNRQDADFNQTKSNSDPEFHRRIDMSLDDFQNKYTMVYEPDKTLVKVIEPNDLRHDIERRRKERLQNEDENIFHMASPTERNHQSPSFSKVKTIRADGFQKPPHFIKSNFRKFIQKPYINYTMQRKDAIDQKIFRVEENHQNRRGSKGSFKNFLGGRFQPHYKSHLVQKSMYIQAKYQRLRFAGPRGFITNKFRNRFLRKKKEYPVLPRTNNLELLQVEPTLYEDLTEHLIFVRNWN.

Basic residues predominate over residues 1–13; it reads MARSRSRSPRWKQ. Disordered regions lie at residues 1–114, 132–177, and 190–252; these read MARS…YMPT, PTVQ…QMSL, and DELR…DPAR. S15 and S17 each carry phosphoserine. The segment covering 23 to 57 has biased composition (basic and acidic residues); sequence FEYHEERHFHGHYDPEYRHDQQRPFTWRMDDEKHG. A phosphoserine mark is found at S78 and S80. The segment covering 85 to 109 has biased composition (basic and acidic residues); the sequence is PVEKFDTYKPHQEYFPGRGDDDRRS. Residues 190 to 199 are compositionally biased toward basic and acidic residues; the sequence is DELRHQRVQE. S205 is subject to Phosphoserine. 2 stretches are compositionally biased toward basic and acidic residues: residues 222–231 and 238–252; these read RYPEDHDFRK and RPTD…DPAR. Residue K416 forms a Glycyl lysine isopeptide (Lys-Gly) (interchain with G-Cter in SUMO2) linkage. Residue S592 is modified to Phosphoserine.

This sequence belongs to the BCLAF1/THRAP3 family.

It localises to the mitochondrion. The sequence is that of BCLAF1 and THRAP3 family member 3 from Mus musculus (Mouse).